A 945-amino-acid chain; its full sequence is Valine--tRNA ligase (945 aa).

Positions 42-52 (PNVTGTLHMGH) match the 'HIGH' region motif. A 'KMSKS' region motif is present at residues 552–556 (KMSKS). K555 is an ATP binding site. Residues 879–945 (DKATETARLS…VQTQLSKLKD (67 aa)) are a coiled coil.

This sequence belongs to the class-I aminoacyl-tRNA synthetase family. ValS type 1 subfamily. As to quaternary structure, monomer.

It localises to the cytoplasm. It catalyses the reaction tRNA(Val) + L-valine + ATP = L-valyl-tRNA(Val) + AMP + diphosphate. In terms of biological role, catalyzes the attachment of valine to tRNA(Val). As ValRS can inadvertently accommodate and process structurally similar amino acids such as threonine, to avoid such errors, it has a 'posttransfer' editing activity that hydrolyzes mischarged Thr-tRNA(Val) in a tRNA-dependent manner. The chain is Valine--tRNA ligase from Neisseria meningitidis serogroup A / serotype 4A (strain DSM 15465 / Z2491).